Consider the following 143-residue polypeptide: MAKKIIGFIKLQIPAGKANPSPPVGPALGQRGLNIMEFCKAFNAQTQALEPGLPIPVVITAFADKSFTFVLKTPPATVLIKKAAKIDKGSSKPHTDKVGKITRAQAEDIAKTKMPDLTAADLDAAVRTIAGSARSMGITVEGV.

This sequence belongs to the universal ribosomal protein uL11 family. As to quaternary structure, part of the ribosomal stalk of the 50S ribosomal subunit. Interacts with L10 and the large rRNA to form the base of the stalk. L10 forms an elongated spine to which L12 dimers bind in a sequential fashion forming a multimeric L10(L12)X complex. One or more lysine residues are methylated.

Its function is as follows. Forms part of the ribosomal stalk which helps the ribosome interact with GTP-bound translation factors. The polypeptide is Large ribosomal subunit protein uL11 (Paraburkholderia xenovorans (strain LB400)).